A 123-amino-acid chain; its full sequence is Large ribosomal subunit protein bL12 (123 aa).

This sequence belongs to the bacterial ribosomal protein bL12 family. As to quaternary structure, homodimer. Part of the ribosomal stalk of the 50S ribosomal subunit. Forms a multimeric L10(L12)X complex, where L10 forms an elongated spine to which 2 to 4 L12 dimers bind in a sequential fashion. Binds GTP-bound translation factors.

Functionally, forms part of the ribosomal stalk which helps the ribosome interact with GTP-bound translation factors. Is thus essential for accurate translation. In Acholeplasma laidlawii (strain PG-8A), this protein is Large ribosomal subunit protein bL12.